A 136-amino-acid polypeptide reads, in one-letter code: Protein YebF (136 aa).

The N-terminal stretch at 1 to 23 (MKKTGLALVLATILLGMMGSVHA) is a signal peptide. Positions 30–117 (KVPACIGLNQ…KSGTMTYTGL (88 aa)) constitute a YebF/Cmi domain. A disulfide bridge links Cys34 with Cys107. The segment at 117–136 (LNAQTRPDPQIGLNSQAGPK) is disordered.

Belongs to the YebF family.

The protein localises to the secreted. The chain is Protein YebF from Yersinia pseudotuberculosis serotype O:1b (strain IP 31758).